The primary structure comprises 108 residues: DNA-binding protein HBbu (108 aa).

The protein belongs to the bacterial histone-like protein family.

Its function is as follows. Histone-like DNA-binding protein which is capable of wrapping DNA to stabilize it, and thus to prevent its denaturation under extreme environmental conditions. This chain is DNA-binding protein HBbu (hbb), found in Borrelia parkeri.